Reading from the N-terminus, the 449-residue chain is Adenylyltransferase and sulfurtransferase MOCS3 (449 aa).

Residues Gly96, Asp117, 124-128 (SNLHR), Lys141, and 185-186 (DN) each bind ATP. Zn(2+) is bound by residues Cys227 and Cys230. The active-site Glycyl thioester intermediate; for adenylyltransferase activity is the Cys244. Positions 302 and 305 each coordinate Zn(2+). Residues 351-447 (QDKPHLLLDV…WTNQIDENFP (97 aa)) enclose the Rhodanese domain. Cys406 serves as the catalytic Cysteine persulfide intermediate; for sulfurtransferase activity.

It in the N-terminal section; belongs to the HesA/MoeB/ThiF family. UBA4 subfamily. It depends on Zn(2+) as a cofactor.

The protein localises to the cytoplasm. It localises to the cytosol. It carries out the reaction [molybdopterin-synthase sulfur-carrier protein]-C-terminal Gly-Gly + ATP + H(+) = [molybdopterin-synthase sulfur-carrier protein]-C-terminal Gly-Gly-AMP + diphosphate. The catalysed reaction is [molybdopterin-synthase sulfur-carrier protein]-C-terminal Gly-Gly-AMP + S-sulfanyl-L-cysteinyl-[cysteine desulfurase] + AH2 = [molybdopterin-synthase sulfur-carrier protein]-C-terminal-Gly-aminoethanethioate + L-cysteinyl-[cysteine desulfurase] + A + AMP + 2 H(+). The protein operates within tRNA modification; 5-methoxycarbonylmethyl-2-thiouridine-tRNA biosynthesis. It functions in the pathway cofactor biosynthesis; molybdopterin biosynthesis. Its function is as follows. Plays a central role in 2-thiolation of mcm(5)S(2)U at tRNA wobble positions of cytosolic tRNA(Lys), tRNA(Glu) and tRNA(Gln). Also essential during biosynthesis of the molybdenum cofactor. Acts by mediating the C-terminal thiocarboxylation of sulfur carriers URM1 and MOCS2A. Its N-terminus first activates URM1 and MOCS2A as acyl-adenylates (-COAMP), then the persulfide sulfur on the catalytic cysteine is transferred to URM1 and MOCS2A to form thiocarboxylation (-COSH) of their C-terminus. The reaction probably involves hydrogen sulfide that is generated from the persulfide intermediate and that acts as a nucleophile towards URM1 and MOCS2A. Subsequently, a transient disulfide bond is formed. Does not use thiosulfate as sulfur donor; NFS1 probably acting as a sulfur donor for thiocarboxylation reactions. The sequence is that of Adenylyltransferase and sulfurtransferase MOCS3 from Drosophila grimshawi (Hawaiian fruit fly).